The sequence spans 126 residues: Fluoride-specific ion channel FluC 3 (126 aa).

4 helical membrane passes run 7 to 27, 37 to 57, 68 to 87, and 101 to 121; these read MWVGLGGGIGSLLRWWIGLSI, LGTFLINISGAFVIGYLSILF, LMNTAVLTGILGGYTTFSSM, and AIAAGYLIISVLVGLAAAAFG. Residues Gly-79 and Thr-82 each contribute to the Na(+) site.

This sequence belongs to the fluoride channel Fluc/FEX (TC 1.A.43) family.

The protein localises to the cell inner membrane. It catalyses the reaction fluoride(in) = fluoride(out). With respect to regulation, na(+) is not transported, but it plays an essential structural role and its presence is essential for fluoride channel function. Functionally, fluoride-specific ion channel. Important for reducing fluoride concentration in the cell, thus reducing its toxicity. The sequence is that of Fluoride-specific ion channel FluC 3 from Yersinia pestis.